The following is a 242-amino-acid chain: UDP-2,3-diacylglucosamine hydrolase (242 aa).

Mn(2+) is bound by residues Asp-8, His-10, Asp-41, Asn-79, and His-114. Position 79–80 (79–80) interacts with substrate; that stretch reads NR. Substrate is bound by residues Asp-122, Lys-164, Lys-167, and His-195. His-195 and His-197 together coordinate Mn(2+).

This sequence belongs to the LpxH family. The cofactor is Mn(2+).

Its subcellular location is the cell inner membrane. The catalysed reaction is UDP-2-N,3-O-bis[(3R)-3-hydroxytetradecanoyl]-alpha-D-glucosamine + H2O = 2-N,3-O-bis[(3R)-3-hydroxytetradecanoyl]-alpha-D-glucosaminyl 1-phosphate + UMP + 2 H(+). Its pathway is glycolipid biosynthesis; lipid IV(A) biosynthesis; lipid IV(A) from (3R)-3-hydroxytetradecanoyl-[acyl-carrier-protein] and UDP-N-acetyl-alpha-D-glucosamine: step 4/6. Its function is as follows. Hydrolyzes the pyrophosphate bond of UDP-2,3-diacylglucosamine to yield 2,3-diacylglucosamine 1-phosphate (lipid X) and UMP by catalyzing the attack of water at the alpha-P atom. Involved in the biosynthesis of lipid A, a phosphorylated glycolipid that anchors the lipopolysaccharide to the outer membrane of the cell. The polypeptide is UDP-2,3-diacylglucosamine hydrolase (Vibrio parahaemolyticus serotype O3:K6 (strain RIMD 2210633)).